The primary structure comprises 417 residues: NADH-quinone oxidoreductase subunit D (417 aa).

It belongs to the complex I 49 kDa subunit family. In terms of assembly, NDH-1 is composed of 14 different subunits. Subunits NuoB, C, D, E, F, and G constitute the peripheral sector of the complex.

The protein resides in the cell inner membrane. The enzyme catalyses a quinone + NADH + 5 H(+)(in) = a quinol + NAD(+) + 4 H(+)(out). In terms of biological role, NDH-1 shuttles electrons from NADH, via FMN and iron-sulfur (Fe-S) centers, to quinones in the respiratory chain. The immediate electron acceptor for the enzyme in this species is believed to be ubiquinone. Couples the redox reaction to proton translocation (for every two electrons transferred, four hydrogen ions are translocated across the cytoplasmic membrane), and thus conserves the redox energy in a proton gradient. This Herminiimonas arsenicoxydans protein is NADH-quinone oxidoreductase subunit D.